Here is a 260-residue protein sequence, read N- to C-terminus: HTH-type transcriptional repressor NanR (260 aa).

One can recognise an HTH gntR-type domain in the interval 27–95 (KKLSDMVEEE…NGERARVSMP (69 aa)). Positions 55 to 74 (ERELMEFFNVGRPSVREALA) form a DNA-binding region, H-T-H motif.

The protein belongs to the NanR family.

Functionally, transcriptional repressor that controls expression of the genes required for the catabolism of sialic acids. This Enterobacter sp. (strain 638) protein is HTH-type transcriptional repressor NanR.